Reading from the N-terminus, the 64-residue chain is EEIIDVAYQSPEMEVGFNVSYLLDVLNTLKCERVRFNLVDASSSCLIEDCDNSTAEYVIMPMRL.

It belongs to the beta sliding clamp family. As to quaternary structure, forms a ring-shaped head-to-tail homodimer around DNA which binds and tethers DNA polymerases and other proteins to the DNA. The DNA replisome complex has a single clamp-loading complex (3 tau and 1 each of delta, delta', psi and chi subunits) which binds 3 Pol III cores (1 core on the leading strand and 2 on the lagging strand) each with a beta sliding clamp dimer. Additional proteins in the replisome are other copies of gamma, psi and chi, Ssb, DNA helicase and RNA primase.

It localises to the cytoplasm. In terms of biological role, confers DNA tethering and processivity to DNA polymerases and other proteins. Acts as a clamp, forming a ring around DNA (a reaction catalyzed by the clamp-loading complex) which diffuses in an ATP-independent manner freely and bidirectionally along dsDNA. Initially characterized for its ability to contact the catalytic subunit of DNA polymerase III (Pol III), a complex, multichain enzyme responsible for most of the replicative synthesis in bacteria; Pol III exhibits 3'-5' exonuclease proofreading activity. The beta chain is required for initiation of replication as well as for processivity of DNA replication. This is Beta sliding clamp (dnaN) from Actinobacillus pleuropneumoniae (Haemophilus pleuropneumoniae).